The sequence spans 198 residues: Septum-promoting GTP-binding protein 1 (198 aa).

The segment at 6-198 is small GTPase-like; the sequence is KNNVTIKVGM…GDPILEYIDR (193 aa). GTP contacts are provided by residues 17-24, 65-69, and 122-125; these read GDSSIGKT, DLGGQ, and TKYD.

As to quaternary structure, interacts with cdc7 and cdc11.

Functionally, GTP-binding protein essential for the induction of septum formation at G2 and pre-START stages of mitosis. Acts via the cdc7 protein kinase pathway. The sequence is that of Septum-promoting GTP-binding protein 1 (spg1) from Schizosaccharomyces pombe (strain 972 / ATCC 24843) (Fission yeast).